Consider the following 163-residue polypeptide: MLLAIKDFFNSLLLKELFKGMALTGRYLFARKITVQFPEEKTPISPRFRGLHALRRYPNGEERCIACKLCEAVCPALAITIESDARADGTRRTTRYDIDLTKCIFCGFCEEACPVDAIVETQILEYHGEKRGDLYFTKDMLLAVGDRYEPQIAAAKAADAKYR.

4Fe-4S ferredoxin-type domains follow at residues Leu-54–Asp-84 and Thr-94–Ile-123. Residues Cys-64, Cys-67, Cys-70, Cys-74, Cys-103, Cys-106, Cys-109, and Cys-113 each contribute to the [4Fe-4S] cluster site.

This sequence belongs to the complex I 23 kDa subunit family. NDH-1 is composed of 14 different subunits. Subunits NuoA, H, J, K, L, M, N constitute the membrane sector of the complex. Requires [4Fe-4S] cluster as cofactor.

It is found in the cell inner membrane. It catalyses the reaction a quinone + NADH + 5 H(+)(in) = a quinol + NAD(+) + 4 H(+)(out). Functionally, NDH-1 shuttles electrons from NADH, via FMN and iron-sulfur (Fe-S) centers, to quinones in the respiratory chain. The immediate electron acceptor for the enzyme in this species is believed to be ubiquinone. Couples the redox reaction to proton translocation (for every two electrons transferred, four hydrogen ions are translocated across the cytoplasmic membrane), and thus conserves the redox energy in a proton gradient. The polypeptide is NADH-quinone oxidoreductase subunit I (Cupriavidus necator (strain ATCC 17699 / DSM 428 / KCTC 22496 / NCIMB 10442 / H16 / Stanier 337) (Ralstonia eutropha)).